The sequence spans 454 residues: Gustatory and odorant receptor 21a (454 aa).

Over Met1–Ser114 the chain is Cytoplasmic. A helical transmembrane segment spans residues Lys115 to Leu135. The Extracellular segment spans residues Arg136–Ala153. A helical membrane pass occupies residues Ile154–Trp174. The Cytoplasmic segment spans residues Arg175–Asn206. A helical membrane pass occupies residues Leu207–Leu227. Over Ser228 to Arg237 the chain is Extracellular. A helical membrane pass occupies residues Leu238–Trp258. Residues Tyr259–Asn312 are Cytoplasmic-facing. Residues Met313–Ile333 form a helical membrane-spanning segment. Over Ser334–Glu345 the chain is Extracellular. Residues Val346 to Ala366 traverse the membrane as a helical segment. Residues His367–Glu422 are Cytoplasmic-facing. A helical membrane pass occupies residues Leu423 to Ile443. The Extracellular portion of the chain corresponds to Thr444–Ala454.

It belongs to the insect chemoreceptor superfamily. Gustatory receptor (GR) family. Gr21a subfamily. As to quaternary structure, gr21a and Gr63a probably form a heterodimer that responds to CO(2). As to expression, expressed in the adult labellar chemosensory neurons. Carbon dioxide-responsive neurons coexpress Gr21a and Gr63a in a pair of chemosensory receptors at both larval and adult life stages. A single bilateral neuron, expressing the Gr21a receptor, is responsible for CO(2) detection in larvae.

It is found in the cell membrane. Functionally, gustatory and odorant receptor which mediates acceptance or avoidance behavior, depending on its substrates. Gr21a and Gr63a together are sufficient for carbon dioxide detection and avoidance behavior. It is possible that the CO(2) receptors Gr63a and Gr21a activate the TRPC channels through Galpha49B and Plc21C. This innate olfactory avoidance behavior can be inhibited by inhibitory interactions of the odors such as 1-hexanol and 2,3-butanedione with Gr21a and Gr63a. The chain is Gustatory and odorant receptor 21a (Gr21a) from Drosophila melanogaster (Fruit fly).